Consider the following 390-residue polypeptide: Anhydro-N-acetylmuramic acid kinase (390 aa).

An ATP-binding site is contributed by 9–16; the sequence is GTSLDGID.

This sequence belongs to the anhydro-N-acetylmuramic acid kinase family.

The catalysed reaction is 1,6-anhydro-N-acetyl-beta-muramate + ATP + H2O = N-acetyl-D-muramate 6-phosphate + ADP + H(+). It participates in amino-sugar metabolism; 1,6-anhydro-N-acetylmuramate degradation. The protein operates within cell wall biogenesis; peptidoglycan recycling. Functionally, catalyzes the specific phosphorylation of 1,6-anhydro-N-acetylmuramic acid (anhMurNAc) with the simultaneous cleavage of the 1,6-anhydro ring, generating MurNAc-6-P. Is required for the utilization of anhMurNAc either imported from the medium or derived from its own cell wall murein, and thus plays a role in cell wall recycling. This chain is Anhydro-N-acetylmuramic acid kinase, found in Bacillus cereus (strain B4264).